The chain runs to 208 residues: Interleukin-6 (208 aa).

The N-terminal stretch at 1–29 (MNSLFTSAFSPLAVSLGLLLVMTSAFPTP) is a signal peptide. Asn38 is a glycosylation site (N-linked (GlcNAc...) asparagine). Cys72 and Cys78 are joined by a disulfide. A Phosphoserine modification is found at Ser81. Cys101 and Cys111 are disulfide-bonded.

It belongs to the IL-6 superfamily. Component of a hexamer of two molecules each of IL6, IL6R and IL6ST; first binds to IL6R to associate with the signaling subunit IL6ST. Interacts with IL6R (via the N-terminal ectodomain); this interaction may be affected by IL6R-binding with SORL1, hence decreasing IL6 cis signaling. Interacts with SORL1 (via the N-terminal ectodomain); this interaction leads to IL6 internalization and lysosomal degradation. May form a trimeric complex with the soluble SORL1 ectodomain and soluble IL6R receptor; this interaction might stabilize circulating IL6, hence promoting IL6 trans signaling.

The protein localises to the secreted. Cytokine with a wide variety of biological functions in immunity, tissue regeneration, and metabolism. Binds to IL6R, then the complex associates to the signaling subunit IL6ST/gp130 to trigger the intracellular IL6-signaling pathway. The interaction with the membrane-bound IL6R and IL6ST stimulates 'classic signaling', whereas the binding of IL6 and soluble IL6R to IL6ST stimulates 'trans-signaling'. Alternatively, 'cluster signaling' occurs when membrane-bound IL6:IL6R complexes on transmitter cells activate IL6ST receptors on neighboring receiver cells. Functionally, IL6 is a potent inducer of the acute phase response. Rapid production of IL6 contributes to host defense during infection and tissue injury, but excessive IL6 synthesis is involved in disease pathology. In the innate immune response, is synthesized by myeloid cells, such as macrophages and dendritic cells, upon recognition of pathogens through toll-like receptors (TLRs) at the site of infection or tissue injury. In the adaptive immune response, is required for the differentiation of B cells into immunoglobulin-secreting cells. Plays a major role in the differentiation of CD4(+) T cell subsets. Essential factor for the development of T follicular helper (Tfh) cells that are required for the induction of germinal-center formation. Required to drive naive CD4(+) T cells to the Th17 lineage. Also required for proliferation of myeloma cells and the survival of plasmablast cells. In terms of biological role, acts as an essential factor in bone homeostasis and on vessels directly or indirectly by induction of VEGF, resulting in increased angiogenesis activity and vascular permeability. Induces, through 'trans-signaling' and synergistically with IL1B and TNF, the production of VEGF. Involved in metabolic controls, is discharged into the bloodstream after muscle contraction increasing lipolysis and improving insulin resistance. 'Trans-signaling' in central nervous system also regulates energy and glucose homeostasis. Mediates, through GLP-1, crosstalk between insulin-sensitive tissues, intestinal L cells and pancreatic islets to adapt to changes in insulin demand. Also acts as a myokine. Plays a protective role during liver injury, being required for maintenance of tissue regeneration. Also has a pivotal role in iron metabolism by regulating HAMP/hepcidin expression upon inflammation or bacterial infection. Through activation of IL6ST-YAP-NOTCH pathway, induces inflammation-induced epithelial regeneration. The polypeptide is Interleukin-6 (IL6) (Capra hircus (Goat)).